We begin with the raw amino-acid sequence, 209 residues long: Large ribosomal subunit protein uL3 (209 aa).

The disordered stretch occupies residues Phe-128–Thr-156.

This sequence belongs to the universal ribosomal protein uL3 family. Part of the 50S ribosomal subunit. Forms a cluster with proteins L14 and L19.

Its function is as follows. One of the primary rRNA binding proteins, it binds directly near the 3'-end of the 23S rRNA, where it nucleates assembly of the 50S subunit. This is Large ribosomal subunit protein uL3 from Prosthecochloris aestuarii (strain DSM 271 / SK 413).